The primary structure comprises 594 residues: Gamma-terpinene synthase, chloroplastic (594 aa).

The transit peptide at 1-44 (MATLSMQVSILSKEVKNVNNIGMRASKPMVARRVSTTRLRPICS) directs the protein to the chloroplast. Residues D347 and D351 each contribute to the Mn(2+) site. The DDXXD motif signature appears at 347 to 351 (DDVYD). 2 homodimerization regions span residues 353-359 (YGTLDEL) and 425-462 (EAKWYYAGYTPTLAEYLENAKVSISSPTIISQVYFTLP). Positions 491 and 499 each coordinate Mn(2+).

The protein belongs to the terpene synthase family. Homodimer. Mn(2+) is required as a cofactor. It depends on Mg(2+) as a cofactor. In terms of tissue distribution, expressed in peltate glandular trichomes.

It localises to the plastid. Its subcellular location is the chloroplast. It carries out the reaction (2E)-geranyl diphosphate = gamma-terpinene + diphosphate. The enzyme catalyses (2E)-geranyl diphosphate = alpha-terpinene + diphosphate. The protein operates within secondary metabolite biosynthesis; terpenoid biosynthesis. Involved in the biosynthesis of phenolic monoterpenes natural products thymol and carvacrol which have a broad range of biological activities acting as antimicrobial compounds, insecticides, antioxidants and pharmaceutical agents. Monoterpene synthase which catalyzes the conversion of geranyl diphosphate (GPP) to gamma-terpinene and the minor products alpha-thujene, alpha-terpinene, myrcene, sabinene, (+)-R-limonene, alpha-pinene and alpha-phellandrene. The sequence is that of Gamma-terpinene synthase, chloroplastic from Origanum vulgare (Wild marjoram).